We begin with the raw amino-acid sequence, 83 residues long: Cell division topological specificity factor (83 aa).

It belongs to the MinE family.

Functionally, prevents the cell division inhibition by proteins MinC and MinD at internal division sites while permitting inhibition at polar sites. This ensures cell division at the proper site by restricting the formation of a division septum at the midpoint of the long axis of the cell. The sequence is that of Cell division topological specificity factor from Pseudoalteromonas atlantica (strain T6c / ATCC BAA-1087).